A 314-amino-acid polypeptide reads, in one-letter code: Protoheme IX farnesyltransferase (314 aa).

Transmembrane regions (helical) follow at residues 36 to 56 (IGIV…AISF), 65 to 85 (WGTF…GCIV), 114 to 134 (SVLT…MFTS), 135 to 155 (WYAT…YTIW), 179 to 199 (WAAI…IMFI), 237 to 257 (IIVY…TMGI), 259 to 279 (FAVI…TGLF), and 290 to 310 (IFIF…IVKL).

This sequence belongs to the UbiA prenyltransferase family. Protoheme IX farnesyltransferase subfamily. Interacts with CtaA.

The protein resides in the cell membrane. The enzyme catalyses heme b + (2E,6E)-farnesyl diphosphate + H2O = Fe(II)-heme o + diphosphate. It functions in the pathway porphyrin-containing compound metabolism; heme O biosynthesis; heme O from protoheme: step 1/1. In terms of biological role, converts heme B (protoheme IX) to heme O by substitution of the vinyl group on carbon 2 of heme B porphyrin ring with a hydroxyethyl farnesyl side group. This Oceanobacillus iheyensis (strain DSM 14371 / CIP 107618 / JCM 11309 / KCTC 3954 / HTE831) protein is Protoheme IX farnesyltransferase.